The following is a 549-amino-acid chain: Glucose-6-phosphate isomerase (549 aa).

The active-site Proton donor is Glu353. Active-site residues include His384 and Lys510. Residues 523–549 are disordered; sequence AEPPAAQSDSSTDALVRRYRSERGRTA. Residues 537-549 show a composition bias toward basic and acidic residues; that stretch reads LVRRYRSERGRTA.

This sequence belongs to the GPI family.

The protein resides in the cytoplasm. The catalysed reaction is alpha-D-glucose 6-phosphate = beta-D-fructose 6-phosphate. It functions in the pathway carbohydrate biosynthesis; gluconeogenesis. The protein operates within carbohydrate degradation; glycolysis; D-glyceraldehyde 3-phosphate and glycerone phosphate from D-glucose: step 2/4. Its function is as follows. Catalyzes the reversible isomerization of glucose-6-phosphate to fructose-6-phosphate. The chain is Glucose-6-phosphate isomerase from Mycolicibacterium gilvum (strain PYR-GCK) (Mycobacterium gilvum (strain PYR-GCK)).